The following is a 183-amino-acid chain: Probable RNA 2'-phosphotransferase (183 aa).

It belongs to the KptA/TPT1 family.

In terms of biological role, removes the 2'-phosphate from RNA via an intermediate in which the phosphate is ADP-ribosylated by NAD followed by a presumed transesterification to release the RNA and generate ADP-ribose 1''-2''-cyclic phosphate (APPR&gt;P). May function as an ADP-ribosylase. This Clostridium perfringens (strain 13 / Type A) protein is Probable RNA 2'-phosphotransferase.